The primary structure comprises 182 residues: ATP synthase subunit delta (182 aa).

It belongs to the ATPase delta chain family. As to quaternary structure, F-type ATPases have 2 components, F(1) - the catalytic core - and F(0) - the membrane proton channel. F(1) has five subunits: alpha(3), beta(3), gamma(1), delta(1), epsilon(1). CF(0) has four main subunits: a(1), b(1), b'(1) and c(10-14). The alpha and beta chains form an alternating ring which encloses part of the gamma chain. F(1) is attached to F(0) by a central stalk formed by the gamma and epsilon chains, while a peripheral stalk is formed by the delta, b and b' chains.

It is found in the cellular thylakoid membrane. Functionally, f(1)F(0) ATP synthase produces ATP from ADP in the presence of a proton or sodium gradient. F-type ATPases consist of two structural domains, F(1) containing the extramembraneous catalytic core and F(0) containing the membrane proton channel, linked together by a central stalk and a peripheral stalk. During catalysis, ATP synthesis in the catalytic domain of F(1) is coupled via a rotary mechanism of the central stalk subunits to proton translocation. This protein is part of the stalk that links CF(0) to CF(1). It either transmits conformational changes from CF(0) to CF(1) or is implicated in proton conduction. In Synechococcus sp. (strain CC9605), this protein is ATP synthase subunit delta.